Consider the following 405-residue polypeptide: L-rhamnonate dehydratase (405 aa).

His-33 and Arg-59 together coordinate substrate. Residues Asp-226, Glu-252, and Glu-280 each coordinate Mg(2+). The Proton acceptor role is filled by His-329. Glu-349 contacts substrate.

It belongs to the mandelate racemase/muconate lactonizing enzyme family. RhamD subfamily. As to quaternary structure, homooctamer; tetramer of dimers. Mg(2+) is required as a cofactor.

The catalysed reaction is L-rhamnonate = 2-dehydro-3-deoxy-L-rhamnonate + H2O. Its function is as follows. Catalyzes the dehydration of L-rhamnonate to 2-keto-3-deoxy-L-rhamnonate (KDR). This chain is L-rhamnonate dehydratase, found in Salmonella paratyphi A (strain AKU_12601).